The chain runs to 418 residues: Beta-arrestin-1 (418 aa).

Positions 1 to 163 (MGDKGTRVFK…LEEKIHKRNS (163 aa)) are interaction with SRC. An interaction with CHRM2 region spans residues 45 to 86 (PEYLKERRVYVTLTCAFRYGREDLDVLGLTFRKDLFVANVQS). Residue tyrosine 47 is modified to Phosphotyrosine. Lysine 250, methionine 255, lysine 324, and lysine 326 together coordinate 1D-myo-inositol hexakisphosphate. The tract at residues 318–418 (IVSYKVKVKL…GTGSPQLNNR (101 aa)) is interaction with TRAF6. The segment at 353 to 375 (HPKPKEEPPHREVPENETPVDTN) is disordered. The segment covering 355–366 (KPKEEPPHREVP) has biased composition (basic and acidic residues). The short motif at 385–395 (DIVFEDFARQR) is the [DE]-X(1,2)-F-X-X-[FL]-X-X-X-R motif element. Positions 397 to 418 (KGMKDDKEEEEDGTGSPQLNNR) are disordered. Position 412 is a phosphoserine; by GRK5 (serine 412).

It belongs to the arrestin family. Monomer. Homodimer. Homooligomer; the self-association is mediated by InsP6-binding. Heterooligomer with ARRB2; the association is mediated by InsP6-binding. Interacts with GPR143. Interacts with ADRB2 (phosphorylated). Interacts with CHRM2 (phosphorylated). Interacts with LHCGR. Interacts with CYTH2 and CASR. Interacts with AP2B1 (dephosphorylated at 'Tyr-737'); phosphorylation of AP2B1 at 'Tyr-737' disrupts the interaction. Interacts (dephosphorylated at Ser-412) with CLTC. Interacts with CCR2 and GRK2. Interacts with CRR5. Interacts with PTAFR (phosphorylated on serine residues). Interacts with CLTC and MAP2K3. Interacts with CREB1. Interacts with TRAF6. Interacts with IGF1R and MDM2. Interacts with C5AR1. Interacts with PDE4D. Interacts with SRC (via the SH3 domain and the protein kinase domain); the interaction is independent of the phosphorylation state of SRC C-terminus. Interacts with TACR1. Interacts with RAF1. Interacts with CHUK, IKBKB and MAP3K14. Interacts with DVL1; the interaction is enhanced by phosphorylation of DVL1. Interacts with DVL2; the interaction is enhanced by phosphorylation of DVL2. Interacts with IGF1R. Associates with MAP kinase p38. Part of a MAPK signaling complex consisting of TACR1, ARRB1, SRC, MAPK1 (activated) and MAPK3 (activated). Part of a MAPK signaling complex consisting of F2RL1, ARRB1, RAF1, MAPK1 (activated) and MAPK3 (activated). Interacts with MAP2K4/MKK4. Interacts with HCK and CXCR1 (phosphorylated). Interacts with ACKR3 and ACKR4. Interacts with ARRDC1; the interaction is direct. Interacts with GPR61, GPR62 and GPR135. Constitutively phosphorylated at Ser-412 in the cytoplasm. At the plasma membrane, is rapidly dephosphorylated, a process that is required for clathrin binding and ADRB2 endocytosis but not for ADRB2 binding and desensitization. Once internalized, is rephosphorylated. Post-translationally, the ubiquitination status appears to regulate the formation and trafficking of beta-arrestin-GPCR complexes and signaling. Ubiquitination appears to occur GPCR-specific. Ubiquitinated by MDM2; the ubiquitination is required for rapid internalization of ADRB2. Deubiquitinated by USP33; the deubiquitination leads to a dissociation of the beta-arrestin-GPCR complex. Stimulation of a class A GPCR, such as ADRB2, induces transient ubiquitination and subsequently promotes association with USP33.

The protein resides in the cytoplasm. It localises to the nucleus. It is found in the cell membrane. Its subcellular location is the membrane. The protein localises to the clathrin-coated pit. The protein resides in the cell projection. It localises to the pseudopodium. It is found in the cytoplasmic vesicle. Functions in regulating agonist-mediated G-protein coupled receptor (GPCR) signaling by mediating both receptor desensitization and resensitization processes. During homologous desensitization, beta-arrestins bind to the GPRK-phosphorylated receptor and sterically preclude its coupling to the cognate G-protein; the binding appears to require additional receptor determinants exposed only in the active receptor conformation. The beta-arrestins target many receptors for internalization by acting as endocytic adapters (CLASPs, clathrin-associated sorting proteins) and recruiting the GPRCs to the adapter protein 2 complex 2 (AP-2) in clathrin-coated pits (CCPs). However, the extent of beta-arrestin involvement appears to vary significantly depending on the receptor, agonist and cell type. Internalized arrestin-receptor complexes traffic to intracellular endosomes, where they remain uncoupled from G-proteins. Two different modes of arrestin-mediated internalization occur. Class A receptors, like ADRB2, OPRM1, ENDRA, D1AR and ADRA1B dissociate from beta-arrestin at or near the plasma membrane and undergo rapid recycling. Class B receptors, like AVPR2, AGTR1, NTSR1, TRHR and TACR1 internalize as a complex with arrestin and traffic with it to endosomal vesicles, presumably as desensitized receptors, for extended periods of time. Receptor resensitization then requires that receptor-bound arrestin is removed so that the receptor can be dephosphorylated and returned to the plasma membrane. Involved in internalization of P2RY4 and UTP-stimulated internalization of P2RY2. Involved in phosphorylation-dependent internalization of OPRD1 ands subsequent recycling. Involved in the degradation of cAMP by recruiting cAMP phosphodiesterases to ligand-activated receptors. Beta-arrestins function as multivalent adapter proteins that can switch the GPCR from a G-protein signaling mode that transmits short-lived signals from the plasma membrane via small molecule second messengers and ion channels to a beta-arrestin signaling mode that transmits a distinct set of signals that are initiated as the receptor internalizes and transits the intracellular compartment. Acts as a signaling scaffold for MAPK pathways such as MAPK1/3 (ERK1/2). ERK1/2 activated by the beta-arrestin scaffold is largely excluded from the nucleus and confined to cytoplasmic locations such as endocytic vesicles, also called beta-arrestin signalosomes. Recruits c-Src/SRC to ADRB2 resulting in ERK activation. GPCRs for which the beta-arrestin-mediated signaling relies on both ARRB1 and ARRB2 (codependent regulation) include ADRB2, F2RL1 and PTH1R. For some GPCRs the beta-arrestin-mediated signaling relies on either ARRB1 or ARRB2 and is inhibited by the other respective beta-arrestin form (reciprocal regulation). Inhibits ERK1/2 signaling in AGTR1- and AVPR2-mediated activation (reciprocal regulation). Is required for SP-stimulated endocytosis of NK1R and recruits c-Src/SRC to internalized NK1R resulting in ERK1/2 activation, which is required for the antiapoptotic effects of SP. Is involved in proteinase-activated F2RL1-mediated ERK activity. Acts as a signaling scaffold for the AKT1 pathway. Is involved in alpha-thrombin-stimulated AKT1 signaling. Is involved in IGF1-stimulated AKT1 signaling leading to increased protection from apoptosis. Involved in activation of the p38 MAPK signaling pathway and in actin bundle formation. Involved in F2RL1-mediated cytoskeletal rearrangement and chemotaxis. Involved in AGTR1-mediated stress fiber formation by acting together with GNAQ to activate RHOA. Appears to function as signaling scaffold involved in regulation of MIP-1-beta-stimulated CCR5-dependent chemotaxis. Involved in attenuation of NF-kappa-B-dependent transcription in response to GPCR or cytokine stimulation by interacting with and stabilizing CHUK. May serve as nuclear messenger for GPCRs. Involved in OPRD1-stimulated transcriptional regulation by translocating to CDKN1B and FOS promoter regions and recruiting EP300 resulting in acetylation of histone H4. Involved in regulation of LEF1 transcriptional activity via interaction with DVL1 and/or DVL2 Also involved in regulation of receptors other than GPCRs. Involved in Toll-like receptor and IL-1 receptor signaling through the interaction with TRAF6 which prevents TRAF6 autoubiquitination and oligomerization required for activation of NF-kappa-B and JUN. Binds phosphoinositides. Binds inositolhexakisphosphate (InsP6). Involved in IL8-mediated granule release in neutrophils. Required for atypical chemokine receptor ACKR2-induced RAC1-LIMK1-PAK1-dependent phosphorylation of cofilin (CFL1) and for the up-regulation of ACKR2 from endosomal compartment to cell membrane, increasing its efficiency in chemokine uptake and degradation. Involved in the internalization of the atypical chemokine receptor ACKR3. Negatively regulates the NOTCH signaling pathway by mediating the ubiquitination and degradation of NOTCH1 by ITCH. Participates in the recruitment of the ubiquitin-protein ligase to the receptor. In Homo sapiens (Human), this protein is Beta-arrestin-1 (ARRB1).